The sequence spans 505 residues: Histidine ammonia-lyase (505 aa).

The 5-imidazolinone (Ala-Gly) cross-link spans 141–143 (ASG). Residue S142 is modified to 2,3-didehydroalanine (Ser).

This sequence belongs to the PAL/histidase family. Contains an active site 4-methylidene-imidazol-5-one (MIO), which is formed autocatalytically by cyclization and dehydration of residues Ala-Ser-Gly.

The protein resides in the cytoplasm. The enzyme catalyses L-histidine = trans-urocanate + NH4(+). The protein operates within amino-acid degradation; L-histidine degradation into L-glutamate; N-formimidoyl-L-glutamate from L-histidine: step 1/3. The chain is Histidine ammonia-lyase from Bacillus mycoides (strain KBAB4) (Bacillus weihenstephanensis).